A 277-amino-acid polypeptide reads, in one-letter code: Urease accessory protein UreD (277 aa).

Belongs to the UreD family. As to quaternary structure, ureD, UreF and UreG form a complex that acts as a GTP-hydrolysis-dependent molecular chaperone, activating the urease apoprotein by helping to assemble the nickel containing metallocenter of UreC. The UreE protein probably delivers the nickel.

The protein localises to the cytoplasm. Required for maturation of urease via the functional incorporation of the urease nickel metallocenter. The sequence is that of Urease accessory protein UreD from Yersinia pestis bv. Antiqua (strain Antiqua).